A 321-amino-acid chain; its full sequence is tRNA(Ile)-lysidine synthase (321 aa).

30–35 (SGGSDS) is an ATP binding site.

This sequence belongs to the tRNA(Ile)-lysidine synthase family.

The protein localises to the cytoplasm. The catalysed reaction is cytidine(34) in tRNA(Ile2) + L-lysine + ATP = lysidine(34) in tRNA(Ile2) + AMP + diphosphate + H(+). Its function is as follows. Ligates lysine onto the cytidine present at position 34 of the AUA codon-specific tRNA(Ile) that contains the anticodon CAU, in an ATP-dependent manner. Cytidine is converted to lysidine, thus changing the amino acid specificity of the tRNA from methionine to isoleucine. This is tRNA(Ile)-lysidine synthase from Chlamydia trachomatis serovar D (strain ATCC VR-885 / DSM 19411 / UW-3/Cx).